Consider the following 76-residue polypeptide: Omega-conotoxin MoVIA (76 aa).

The N-terminal stretch at 1–22 is a signal peptide; that stretch reads MKLTCVVIVAVLFLTACQLITA. Positions 23-45 are excised as a propeptide; the sequence is DDSRSTQRHRALRSTTKLSMSTR. Cystine bridges form between Cys46–Cys61, Cys53–Cys64, and Cys60–Cys71. Hydroxyproline is present on residues Pro49 and Pro55.

Belongs to the conotoxin O1 superfamily. Expressed by the venom duct.

The protein resides in the secreted. Functionally, omega-conotoxins act at presynaptic membranes, they bind and block voltage-gated calcium channels (Cav). This toxin potently blocks mammalian N-type calcium channels (Cav2.2/CACNA1B) (IC(50)=330 nM on human channels). It is 9-fold more potent in displacing radiolabeled omega-conotoxin GVIA from fish brain membranes than from human SH-SY5Y cells. Omega-conotoxins act at presynaptic membranes, they bind and block voltage-gated calcium channels (Cav). This toxin potently blocks mammalian N-type calcium channels (Cav2.2/CACNA1B) (IC(50)=600 nM on human channels). It is 60-fold more potent in displacing radiolabeled omega-conotoxin GVIA from fish brain membranes than from human SH-SY5Y cells. In vivo, when tested on rat neuropathic pain model, this toxin shows an analgesic activity. In Conus moncuri (Sea snail), this protein is Omega-conotoxin MoVIA.